Consider the following 333-residue polypeptide: Heat shock transcription factor, X-linked member 3 (333 aa).

The interval 1-66 (MASQNTEQEY…QDNSPPEDRN (66 aa)) is disordered. Over residues 29 to 39 (GSSPDPNPDSS) the composition is skewed to low complexity. Residues 49–60 (AMSQDPGSQDNS) are compositionally biased toward polar residues. The DNA-binding element occupies 79–182 (FRLSFPRKLW…PRLLENIQRK (104 aa)). Positions 227 to 275 (QGAPSVQGPSGTQSFRRSGMWSKKSATRHPLGNGPPQEPNGPSWEGTSG) are disordered. Residues 228-242 (GAPSVQGPSGTQSFR) are compositionally biased toward polar residues.

The protein belongs to the HSF family.

The protein resides in the nucleus. In Homo sapiens (Human), this protein is Heat shock transcription factor, X-linked member 3.